The primary structure comprises 98 residues: Small ribosomal subunit protein uS19 (98 aa).

The tract at residues 77–98 (TRTFRGHAGGKAEKGGSAPRKK) is disordered.

The protein belongs to the universal ribosomal protein uS19 family.

Functionally, protein S19 forms a complex with S13 that binds strongly to the 16S ribosomal RNA. This is Small ribosomal subunit protein uS19 from Chlorobium limicola (strain DSM 245 / NBRC 103803 / 6330).